A 472-amino-acid polypeptide reads, in one-letter code: Hepatocyte nuclear factor 3-alpha (472 aa).

The segment at residues 169–260 (AKPPYSYISL…GNMFENGCYL (92 aa)) is a DNA-binding region (fork-head). The tract at residues 269–392 (EKQPGAGGGG…ESQLHLKGDP (124 aa)) is disordered. The segment covering 273–289 (GAGGGGGSGSGGSGAKG) has biased composition (gly residues). Phosphoserine is present on residues S307 and S331. Composition is skewed to low complexity over residues 322 to 332 (GAPAPGPAASP) and 351 to 366 (TPASSTAPPISSGPGA).

As to quaternary structure, binds DNA as a monomer. Interacts with FOXA2. Interacts with NKX2-1. Interacts with HDAC7. Interacts with the histone H3-H4 heterodimer. Associates with nucleosomes containing histone H2A. Interacts with AR. Interacts with NR0B2. As to expression, highly expressed in prostate and ESR1-positive breast tumors. Overexpressed in esophageal and lung adenocarcinomas.

It is found in the nucleus. In terms of biological role, transcription factor that is involved in embryonic development, establishment of tissue-specific gene expression and regulation of gene expression in differentiated tissues. Is thought to act as a 'pioneer' factor opening the compacted chromatin for other proteins through interactions with nucleosomal core histones and thereby replacing linker histones at target enhancer and/or promoter sites. Binds DNA with the consensus sequence 5'-[AC]A[AT]T[AG]TT[GT][AG][CT]T[CT]-3'. Proposed to play a role in translating the epigenetic signatures into cell type-specific enhancer-driven transcriptional programs. Its differential recruitment to chromatin is dependent on distribution of histone H3 methylated at 'Lys-5' (H3K4me2) in estrogen-regulated genes. Involved in the development of multiple endoderm-derived organ systems such as liver, pancreas, lung and prostate; FOXA1 and FOXA2 seem to have at least in part redundant roles. Modulates the transcriptional activity of nuclear hormone receptors. Is involved in ESR1-mediated transcription; required for ESR1 binding to the NKX2-1 promoter in breast cancer cells; binds to the RPRM promoter and is required for the estrogen-induced repression of RPRM. Involved in regulation of apoptosis by inhibiting the expression of BCL2. Involved in cell cycle regulation by activating expression of CDKN1B, alone or in conjunction with BRCA1. Originally described as a transcription activator for a number of liver genes such as AFP, albumin, tyrosine aminotransferase, PEPCK, etc. Interacts with the cis-acting regulatory regions of these genes. Involved in glucose homeostasis. The chain is Hepatocyte nuclear factor 3-alpha (FOXA1) from Homo sapiens (Human).